The primary structure comprises 457 residues: Multidrug resistance protein MdtK (457 aa).

A run of 12 helical transmembrane segments spans residues 11–31, 53–73, 93–113, 127–147, 159–179, 190–210, 249–269, 276–296, 313–333, 357–377, 387–407, and 417–437; these read LSALAVPVIIAQVSQTSMGVV, IWLPAILFGHGLLLALTPVVA, FLAAIISVLTMLVLYQGEYAI, AIGYLHALLWGVPGYLFYQVL, PGMMIGFIGLLINIPINYIFI, GVGCGVATASVYWIMMLLMML, LLFEVTLFAVVALLVLPLGVV, IALNFSSLMFVLPLSVGVATT, IAAHTGIMAGVALACCTAIFT, LMLLAAVYQISDAVQVIGTGV, IFYITFVAYWVLGLPSGYLLA, and GPAGFWCGFIIGLTAAAVMMV.

This sequence belongs to the multi antimicrobial extrusion (MATE) (TC 2.A.66.1) family. MdtK subfamily.

It is found in the cell inner membrane. In terms of biological role, multidrug efflux pump that functions probably as a Na(+)/drug antiporter. The chain is Multidrug resistance protein MdtK from Pectobacterium atrosepticum (strain SCRI 1043 / ATCC BAA-672) (Erwinia carotovora subsp. atroseptica).